A 343-amino-acid chain; its full sequence is Multidrug resistance protein MdtN (343 aa).

At 1-12 the chain is on the cytoplasmic side; sequence MESTPKKAPRSK. Residues 13–33 traverse the membrane as a helical; Signal-anchor for type II membrane protein segment; sequence FPALLVVALALVALVFVIWRV. Over 34-343 the chain is Periplasmic; sequence DSAPSTNDAY…ASAVANLEPQ (310 aa).

It belongs to the membrane fusion protein (MFP) (TC 8.A.1) family. Could be part of a tripartite efflux system composed of MdtN, MdtO and MdtP.

It localises to the cell inner membrane. Its function is as follows. Could be involved in resistance to puromycin, acriflavine and tetraphenylarsonium chloride. This Escherichia coli O6:H1 (strain CFT073 / ATCC 700928 / UPEC) protein is Multidrug resistance protein MdtN (mdtN).